A 607-amino-acid chain; its full sequence is DNA primase (607 aa).

The segment at 39–63 adopts a CHC2-type zinc-finger fold; that stretch reads CPFHDDKNPSMSISSSKNIFKCWAC. The region spanning 267–350 is the Toprim domain; sequence NQLFIVEGYF…IVEIVQWEHN (84 aa). E273, D319, and D321 together coordinate Mg(2+).

The protein belongs to the DnaG primase family. Monomer. Interacts with DnaB. Zn(2+) serves as cofactor. The cofactor is Mg(2+).

The enzyme catalyses ssDNA + n NTP = ssDNA/pppN(pN)n-1 hybrid + (n-1) diphosphate.. Its function is as follows. RNA polymerase that catalyzes the synthesis of short RNA molecules used as primers for DNA polymerase during DNA replication. This chain is DNA primase, found in Mycoplasma genitalium (strain ATCC 33530 / DSM 19775 / NCTC 10195 / G37) (Mycoplasmoides genitalium).